Consider the following 313-residue polypeptide: tRNA dimethylallyltransferase (313 aa).

9-16 (GPTATGKS) is an ATP binding site. A substrate-binding site is contributed by 11–16 (TATGKS).

Belongs to the IPP transferase family. In terms of assembly, monomer. The cofactor is Mg(2+).

It carries out the reaction adenosine(37) in tRNA + dimethylallyl diphosphate = N(6)-dimethylallyladenosine(37) in tRNA + diphosphate. Functionally, catalyzes the transfer of a dimethylallyl group onto the adenine at position 37 in tRNAs that read codons beginning with uridine, leading to the formation of N6-(dimethylallyl)adenosine (i(6)A). In Mycobacteroides abscessus (strain ATCC 19977 / DSM 44196 / CCUG 20993 / CIP 104536 / JCM 13569 / NCTC 13031 / TMC 1543 / L948) (Mycobacterium abscessus), this protein is tRNA dimethylallyltransferase.